The primary structure comprises 863 residues: Alanine--tRNA ligase (863 aa).

Residues His-552, His-556, Cys-654, and His-658 each contribute to the Zn(2+) site.

This sequence belongs to the class-II aminoacyl-tRNA synthetase family. The cofactor is Zn(2+).

Its subcellular location is the cytoplasm. The enzyme catalyses tRNA(Ala) + L-alanine + ATP = L-alanyl-tRNA(Ala) + AMP + diphosphate. In terms of biological role, catalyzes the attachment of alanine to tRNA(Ala) in a two-step reaction: alanine is first activated by ATP to form Ala-AMP and then transferred to the acceptor end of tRNA(Ala). Also edits incorrectly charged Ser-tRNA(Ala) and Gly-tRNA(Ala) via its editing domain. This Halorhodospira halophila (strain DSM 244 / SL1) (Ectothiorhodospira halophila (strain DSM 244 / SL1)) protein is Alanine--tRNA ligase.